A 189-amino-acid chain; its full sequence is Transcription factor FapR (189 aa).

The protein belongs to the FapR family.

Functionally, transcriptional factor involved in regulation of membrane lipid biosynthesis by repressing genes involved in fatty acid and phospholipid metabolism. The protein is Transcription factor FapR of Listeria innocua serovar 6a (strain ATCC BAA-680 / CLIP 11262).